A 244-amino-acid chain; its full sequence is Phosphoadenosine 5'-phosphosulfate reductase (244 aa).

Cys-239 acts as the Nucleophile; cysteine thiosulfonate intermediate in catalysis.

The protein belongs to the PAPS reductase family. CysH subfamily.

Its subcellular location is the cytoplasm. It carries out the reaction [thioredoxin]-disulfide + sulfite + adenosine 3',5'-bisphosphate + 2 H(+) = [thioredoxin]-dithiol + 3'-phosphoadenylyl sulfate. It participates in sulfur metabolism; hydrogen sulfide biosynthesis; sulfite from sulfate: step 3/3. Its function is as follows. Catalyzes the formation of sulfite from phosphoadenosine 5'-phosphosulfate (PAPS) using thioredoxin as an electron donor. This chain is Phosphoadenosine 5'-phosphosulfate reductase, found in Shigella boydii serotype 4 (strain Sb227).